Reading from the N-terminus, the 462-residue chain is Cysteine proteinase RD21A (462 aa).

A signal peptide spans methionine 1–alanine 21. The propeptide at valine 22–glutamate 136 is activation peptide. The N-linked (GlcNAc...) asparagine glycan is linked to asparagine 90. 5 disulfide bridges follow: cysteine 158–cysteine 200, cysteine 192–cysteine 233, cysteine 291–cysteine 342, cysteine 375–cysteine 387, and cysteine 381–cysteine 402. The active site involves cysteine 161. Residues histidine 297 and asparagine 317 contribute to the active site. A propeptide spans lysine 353 to alanine 462 (removed in mature form). A glycan (N-linked (GlcNAc...) asparagine) is linked at asparagine 414.

This sequence belongs to the peptidase C1 family. Interacts with SERPIN1. Interacts with PRN2. Interacts with WSCP. Interacts with TZF4, TZF5 and TZF6.

Its subcellular location is the vacuole. The protein resides in the golgi apparatus. It localises to the cytoplasm. The protein localises to the stress granule. It is found in the P-body. Its activity is regulated as follows. Inhibited by the cysteine protease inhibitor E64 (L-trans-epoxysuccinyl-leucylamide-(4-guanido)-butane). Functionally, cysteine protease that plays a role in immunity, senescence, and biotic and abiotic stresses. Involved in immunity against the necrotrophic fungal pathogen Botrytis cinerea. Involved in elicitor-stimulated programmed cell death (PCD). During infection by the necrotrophic fungal pathogen Botrytis cinerea, functions as a PCD-promoting protease that is released from the ER body or vacuole to the cytoplasm. Accumulates in endoplasmic reticulum-derived bodies in epidermal cells and may participate in cell death in stressed or injured cells. Involved in water stress-induced cell death through its protease activity that is released to the cytoplasm after vacuolar collapse. Possesses protease activity in vitro and is involved in cell death in the transmitting tract and septum epidermis during flower development. Possesses peptide ligase activity. Can ligate peptides to unmodified N-termini of acceptor proteins. Probably ligates through a thioester intermediate. This chain is Cysteine proteinase RD21A, found in Arabidopsis thaliana (Mouse-ear cress).